We begin with the raw amino-acid sequence, 317 residues long: Ribosomal protein L11 methyltransferase (317 aa).

Threonine 158, glycine 179, aspartate 201, and asparagine 244 together coordinate S-adenosyl-L-methionine.

The protein belongs to the methyltransferase superfamily. PrmA family.

Its subcellular location is the cytoplasm. The enzyme catalyses L-lysyl-[protein] + 3 S-adenosyl-L-methionine = N(6),N(6),N(6)-trimethyl-L-lysyl-[protein] + 3 S-adenosyl-L-homocysteine + 3 H(+). Its function is as follows. Methylates ribosomal protein L11. The sequence is that of Ribosomal protein L11 methyltransferase from Streptococcus pyogenes serotype M5 (strain Manfredo).